Reading from the N-terminus, the 283-residue chain is Galactooligosaccharides transport system permease protein GanQ (283 aa).

6 helical membrane-spanning segments follow: residues 13-33 (LLFS…PLLW), 82-102 (ISLF…YAFS), 115-135 (LFLL…FVLA), 137-157 (ILGM…GLIP), 188-208 (IFFQ…AMNG), and 248-268 (TTFA…FIML). Positions 76–268 (YVNSMKISLF…IPVAVIFIML (193 aa)) constitute an ABC transmembrane type-1 domain.

This sequence belongs to the binding-protein-dependent transport system permease family. In terms of assembly, the complex is composed of two ATP-binding proteins (MsmX), two transmembrane proteins (GanP and GanQ) and a solute-binding protein (GanS).

It is found in the cell membrane. In terms of biological role, involved in galactan degradation. Part of the ABC transporter complex GanPQS involved in the uptake of galactooligosaccharides. Responsible for the translocation of the substrate across the membrane. The polypeptide is Galactooligosaccharides transport system permease protein GanQ (ganQ) (Bacillus subtilis (strain 168)).